Reading from the N-terminus, the 609-residue chain is Nuclear factor 7, brain (609 aa).

In terms of domain architecture, Tudor-knot spans 21–75 (NVGSTYPCKRSDGSQHDAEIVKVRYNKQAGREEYYAHYVGLNRRQNEWVDKSRLV). Positions 74–84 (LVLTKPPKEGE) are enriched in basic and acidic residues. Positions 74–129 (LVLTKPPKEGETNGTDQEVTDTAEQPDSKTPQKRKIEEPEPEPKKAKVEEKDASKN) are disordered. Residues 85–102 (TNGTDQEVTDTAEQPDSK) are compositionally biased toward polar residues. Thr103 is subject to Phosphothreonine; by CDK1. The span at 107–127 (RKIEEPEPEPKKAKVEEKDAS) shows a compositional bias: basic and acidic residues. The RING-type zinc finger occupies 145–185 (CPLCVELFKDPVMVACGHNFCRSCIDKAWEGQSSFACPECR). A B box-type zinc finger spans residues 219 to 260 (RPLEKCSEHDERLKLYCKDDGTLSCVICRDSLKHASHNFLPI). The Zn(2+) site is built by Cys224, His227, Cys246, and His252. Positions 278-371 (LEASLKVTEQ…SLAKERMEDT (94 aa)) form a coiled coil. Positions 413 to 609 (GPIQYIMWKE…VDPLRFVHNK (197 aa)) constitute a B30.2/SPRY domain.

Monomer. Threonine (predominantly) and serine residues are phosphorylated during oocyte maturation, when CDK1 is active. As to expression, at the neurula stage, high expression in dorsal embryo region including neural folds and somites. Also high expression in adult brain (CNS) and low expression in oocytes.

It is found in the nucleus. Functionally, transcription factor that determines dorsal-ventral body axis. This is Nuclear factor 7, brain from Xenopus laevis (African clawed frog).